A 567-amino-acid polypeptide reads, in one-letter code: Proline--tRNA ligase (567 aa).

Belongs to the class-II aminoacyl-tRNA synthetase family. ProS type 1 subfamily. In terms of assembly, homodimer.

The protein resides in the cytoplasm. It catalyses the reaction tRNA(Pro) + L-proline + ATP = L-prolyl-tRNA(Pro) + AMP + diphosphate. Functionally, catalyzes the attachment of proline to tRNA(Pro) in a two-step reaction: proline is first activated by ATP to form Pro-AMP and then transferred to the acceptor end of tRNA(Pro). As ProRS can inadvertently accommodate and process non-cognate amino acids such as alanine and cysteine, to avoid such errors it has two additional distinct editing activities against alanine. One activity is designated as 'pretransfer' editing and involves the tRNA(Pro)-independent hydrolysis of activated Ala-AMP. The other activity is designated 'posttransfer' editing and involves deacylation of mischarged Ala-tRNA(Pro). The misacylated Cys-tRNA(Pro) is not edited by ProRS. This chain is Proline--tRNA ligase, found in Geobacillus thermodenitrificans (strain NG80-2).